The primary structure comprises 398 residues: Putative F-box protein At1g67450 (398 aa).

Positions 2–56 constitute an F-box domain; sequence TMMMSDLPNDLVEEILSRVPITSLGAVRSTCKRWNGLSKDRIVCKGDANQQFTGF.

This is Putative F-box protein At1g67450 from Arabidopsis thaliana (Mouse-ear cress).